The following is a 44-amino-acid chain: MQDLKTYLSTAPVLAISWLIFVAGLLIEINRFFPDALTLTFPSF.

Residues 7–27 (YLSTAPVLAISWLIFVAGLLI) traverse the membrane as a helical segment.

Belongs to the PsaJ family.

It is found in the plastid. Its subcellular location is the chloroplast thylakoid membrane. In terms of biological role, may help in the organization of the PsaE and PsaF subunits. The chain is Photosystem I reaction center subunit IX from Larix decidua (European larch).